Reading from the N-terminus, the 208-residue chain is Uracil phosphoribosyltransferase (208 aa).

5-phospho-alpha-D-ribose 1-diphosphate-binding positions include arginine 78, arginine 103, and 130–138; that span reads DPMLATGGS. Uracil-binding positions include isoleucine 193 and 198–200; that span reads GDA. Aspartate 199 contacts 5-phospho-alpha-D-ribose 1-diphosphate.

This sequence belongs to the UPRTase family. It depends on Mg(2+) as a cofactor.

It catalyses the reaction UMP + diphosphate = 5-phospho-alpha-D-ribose 1-diphosphate + uracil. It functions in the pathway pyrimidine metabolism; UMP biosynthesis via salvage pathway; UMP from uracil: step 1/1. With respect to regulation, allosterically activated by GTP. Functionally, catalyzes the conversion of uracil and 5-phospho-alpha-D-ribose 1-diphosphate (PRPP) to UMP and diphosphate. This chain is Uracil phosphoribosyltransferase, found in Actinobacillus pleuropneumoniae serotype 5b (strain L20).